Consider the following 487-residue polypeptide: Glutamyl-tRNA(Gln) amidotransferase subunit A (487 aa).

Residues Lys-76 and Ser-151 each act as charge relay system in the active site. The active-site Acyl-ester intermediate is Ser-175.

The protein belongs to the amidase family. GatA subfamily. Heterotrimer of A, B and C subunits.

The enzyme catalyses L-glutamyl-tRNA(Gln) + L-glutamine + ATP + H2O = L-glutaminyl-tRNA(Gln) + L-glutamate + ADP + phosphate + H(+). Its function is as follows. Allows the formation of correctly charged Gln-tRNA(Gln) through the transamidation of misacylated Glu-tRNA(Gln) in organisms which lack glutaminyl-tRNA synthetase. The reaction takes place in the presence of glutamine and ATP through an activated gamma-phospho-Glu-tRNA(Gln). In Azoarcus sp. (strain BH72), this protein is Glutamyl-tRNA(Gln) amidotransferase subunit A.